The primary structure comprises 59 residues: uncharacterized protein (59 aa).

The helical transmembrane segment at 7 to 24 (FLLVFIILAQLLSCTPSA) threads the bilayer.

The protein resides in the membrane. This is an uncharacterized protein from Rickettsia prowazekii (strain Madrid E).